Consider the following 321-residue polypeptide: GDP-L-fucose synthase (321 aa).

14-20 (GGSGLVG) lines the NADP(+) pocket. Tyr143 functions as the Proton donor/acceptor in the catalytic mechanism. NADP(+) is bound by residues Lys147, 170–173 (PTNV), and His186. Substrate is bound by residues Lys194, Trp208, Arg215, and Asp277.

The protein belongs to the NAD(P)-dependent epimerase/dehydratase family. Fucose synthase subfamily. In terms of assembly, homodimer.

It carries out the reaction GDP-beta-L-fucose + NADP(+) = GDP-4-dehydro-alpha-D-rhamnose + NADPH + H(+). The protein operates within nucleotide-sugar biosynthesis; GDP-L-fucose biosynthesis via de novo pathway; GDP-L-fucose from GDP-alpha-D-mannose: step 2/2. Its function is as follows. Catalyzes the two-step NADP-dependent conversion of GDP-4-dehydro-6-deoxy-D-mannose to GDP-fucose, involving an epimerase and a reductase reaction. The chain is GDP-L-fucose synthase (GFUS) from Pongo abelii (Sumatran orangutan).